The sequence spans 274 residues: Large ribosomal subunit protein uL2 (274 aa).

The tract at residues 224–256 (VMNPVDHPHGGGEGKTGEGRHPVDPWGNLTKGY) is disordered. The span at 229-246 (DHPHGGGEGKTGEGRHPV) shows a compositional bias: basic and acidic residues.

It belongs to the universal ribosomal protein uL2 family. In terms of assembly, part of the 50S ribosomal subunit. Forms a bridge to the 30S subunit in the 70S ribosome.

Its function is as follows. One of the primary rRNA binding proteins. Required for association of the 30S and 50S subunits to form the 70S ribosome, for tRNA binding and peptide bond formation. It has been suggested to have peptidyltransferase activity; this is somewhat controversial. Makes several contacts with the 16S rRNA in the 70S ribosome. The polypeptide is Large ribosomal subunit protein uL2 (Polaromonas sp. (strain JS666 / ATCC BAA-500)).